The sequence spans 146 residues: Phospholipase A2 OS2 (146 aa).

The signal sequence occupies residues 1-27 (MHPAHLLVLLAVCVSLLGASDIPPLPL). 7 cysteine pairs are disulfide-bonded: cysteine 38/cysteine 99, cysteine 54/cysteine 145, cysteine 56/cysteine 72, cysteine 71/cysteine 126, cysteine 78/cysteine 119, cysteine 88/cysteine 112, and cysteine 106/cysteine 117. Tyrosine 55, glycine 57, and glycine 59 together coordinate Ca(2+). Residue histidine 75 is part of the active site. Aspartate 76 is a binding site for Ca(2+). Residue aspartate 120 is part of the active site.

This sequence belongs to the phospholipase A2 family. Group I subfamily. D49 sub-subfamily. Monomer. Requires Ca(2+) as cofactor. In terms of tissue distribution, expressed by the venom gland.

It localises to the secreted. It catalyses the reaction a 1,2-diacyl-sn-glycero-3-phosphocholine + H2O = a 1-acyl-sn-glycero-3-phosphocholine + a fatty acid + H(+). Snake venom phospholipase A2 (PLA2) that shows high presynaptic neurotoxicity in vertebrata that is independent of catalytic activity, as well as local myotoxicity when intramuscularly injected into mice. Blocks acetylcholine release in Aplysia neurons, and potentiates pro-inflammatory cellular signaling. Potentiates glutamate excitoxicity when coinjected into brain of rats. May act by binding in a calcium-dependent fashion and with high affinity to a neuronal-type (N-type) PLA2 receptor, and with very high affinity to a muscle-type (M-type) PLA2 receptor. In vitro, shows a high-specific activity on E.coli membranes and is more efficient on the anionic phospholipid POPG than on the anionic phospholipid POPS or the zwitterionic phospholipid POPC. Exerts catalytically-independent anti-HIV (IC(50) is 35 nM) activity and catalytically-dependent antimalarial activity (IC(50) is 3.1 nM when tested on P.falciparum grown in serum that contains lipoproteins). PLA2 catalyzes the calcium-dependent hydrolysis of the 2-acyl groups in 3-sn-phosphoglycerides. This Oxyuranus scutellatus scutellatus (Australian taipan) protein is Phospholipase A2 OS2.